Consider the following 196-residue polypeptide: GTP cyclohydrolase 1 (196 aa).

Zn(2+)-binding residues include C85, H88, and C158.

Belongs to the GTP cyclohydrolase I family. As to quaternary structure, homomer.

It catalyses the reaction GTP + H2O = 7,8-dihydroneopterin 3'-triphosphate + formate + H(+). It participates in cofactor biosynthesis; 7,8-dihydroneopterin triphosphate biosynthesis; 7,8-dihydroneopterin triphosphate from GTP: step 1/1. The polypeptide is GTP cyclohydrolase 1 (Corynebacterium aurimucosum (strain ATCC 700975 / DSM 44827 / CIP 107346 / CN-1) (Corynebacterium nigricans)).